Consider the following 97-residue polypeptide: uncharacterized protein (97 aa).

This is an uncharacterized protein from Bacillus subtilis (strain 168).